The chain runs to 140 residues: Putative pre-16S rRNA nuclease (140 aa).

This sequence belongs to the YqgF nuclease family.

The protein localises to the cytoplasm. Its function is as follows. Could be a nuclease involved in processing of the 5'-end of pre-16S rRNA. This chain is Putative pre-16S rRNA nuclease, found in Pasteurella multocida (strain Pm70).